A 264-amino-acid polypeptide reads, in one-letter code: Probable membrane transporter protein HI_0902 (264 aa).

The next 9 helical transmembrane spans lie at 4 to 24, 28 to 48, 49 to 69, 81 to 101, 107 to 127, 147 to 167, 183 to 203, 210 to 230, and 243 to 263; these read FILL…LFGI, LVIV…ESLL, MSTA…GSAQ, AVRI…LFIG, ISAK…VLSI, ILIG…IVPF, AFCG…SGWG, YSLG…SFFT, and VSTL…NMFL.

Belongs to the 4-toluene sulfonate uptake permease (TSUP) (TC 2.A.102) family.

It localises to the cell membrane. In Haemophilus influenzae (strain ATCC 51907 / DSM 11121 / KW20 / Rd), this protein is Probable membrane transporter protein HI_0902.